Consider the following 423-residue polypeptide: Serine--tRNA ligase (423 aa).

An L-serine-binding site is contributed by 230–232 (TAE). 261–263 (RSE) provides a ligand contact to ATP. Glu284 lines the L-serine pocket. Residue 348–351 (EISS) coordinates ATP. L-serine is bound at residue Ser384.

Belongs to the class-II aminoacyl-tRNA synthetase family. Type-1 seryl-tRNA synthetase subfamily. Homodimer. The tRNA molecule binds across the dimer.

Its subcellular location is the cytoplasm. The catalysed reaction is tRNA(Ser) + L-serine + ATP = L-seryl-tRNA(Ser) + AMP + diphosphate + H(+). It catalyses the reaction tRNA(Sec) + L-serine + ATP = L-seryl-tRNA(Sec) + AMP + diphosphate + H(+). It functions in the pathway aminoacyl-tRNA biosynthesis; selenocysteinyl-tRNA(Sec) biosynthesis; L-seryl-tRNA(Sec) from L-serine and tRNA(Sec): step 1/1. Catalyzes the attachment of serine to tRNA(Ser). Is also able to aminoacylate tRNA(Sec) with serine, to form the misacylated tRNA L-seryl-tRNA(Sec), which will be further converted into selenocysteinyl-tRNA(Sec). This Syntrophobacter fumaroxidans (strain DSM 10017 / MPOB) protein is Serine--tRNA ligase.